The primary structure comprises 127 residues: uncharacterized protein (127 aa).

Residues 12–32 (FFFLILFYFCIISSFLFLFIF) traverse the membrane as a helical segment.

Its subcellular location is the membrane. This is an uncharacterized protein from Saccharomyces cerevisiae (strain ATCC 204508 / S288c) (Baker's yeast).